Reading from the N-terminus, the 1273-residue chain is DNA-directed RNA polymerase subunit beta (1273 aa).

Belongs to the RNA polymerase beta chain family. As to quaternary structure, the RNAP catalytic core consists of 2 alpha, 1 beta, 1 beta' and 1 omega subunit. When a sigma factor is associated with the core the holoenzyme is formed, which can initiate transcription.

It catalyses the reaction RNA(n) + a ribonucleoside 5'-triphosphate = RNA(n+1) + diphosphate. Its function is as follows. DNA-dependent RNA polymerase catalyzes the transcription of DNA into RNA using the four ribonucleoside triphosphates as substrates. The sequence is that of DNA-directed RNA polymerase subunit beta from Aster yellows witches'-broom phytoplasma (strain AYWB).